The sequence spans 340 residues: Probable dual-specificity RNA methyltransferase RlmN (340 aa).

The active-site Proton acceptor is Glu91. One can recognise a Radical SAM core domain in the interval 97 to 326; that stretch reads HSGRVTACIS…CEIRKEKGTD (230 aa). Cys104 and Cys331 are joined by a disulfide. Residues Cys111, Cys115, and Cys118 each coordinate [4Fe-4S] cluster. Residues 158–159, Ser190, 213–215, and Asn289 contribute to the S-adenosyl-L-methionine site; these read GE and SLH. Cys331 functions as the S-methylcysteine intermediate in the catalytic mechanism.

This sequence belongs to the radical SAM superfamily. RlmN family. [4Fe-4S] cluster serves as cofactor.

Its subcellular location is the cytoplasm. It catalyses the reaction adenosine(2503) in 23S rRNA + 2 reduced [2Fe-2S]-[ferredoxin] + 2 S-adenosyl-L-methionine = 2-methyladenosine(2503) in 23S rRNA + 5'-deoxyadenosine + L-methionine + 2 oxidized [2Fe-2S]-[ferredoxin] + S-adenosyl-L-homocysteine. The enzyme catalyses adenosine(37) in tRNA + 2 reduced [2Fe-2S]-[ferredoxin] + 2 S-adenosyl-L-methionine = 2-methyladenosine(37) in tRNA + 5'-deoxyadenosine + L-methionine + 2 oxidized [2Fe-2S]-[ferredoxin] + S-adenosyl-L-homocysteine. In terms of biological role, specifically methylates position 2 of adenine 2503 in 23S rRNA and position 2 of adenine 37 in tRNAs. The chain is Probable dual-specificity RNA methyltransferase RlmN from Thermosipho melanesiensis (strain DSM 12029 / CIP 104789 / BI429).